Consider the following 1206-residue polypeptide: DNA-directed RNA polymerase subunit beta' (1206 aa).

The Zn(2+) site is built by cysteine 60, cysteine 62, cysteine 75, and cysteine 78. Mg(2+) contacts are provided by aspartate 449, aspartate 451, and aspartate 453. Residues cysteine 818, cysteine 892, cysteine 899, and cysteine 902 each contribute to the Zn(2+) site.

Belongs to the RNA polymerase beta' chain family. The RNAP catalytic core consists of 2 alpha, 1 beta, 1 beta' and 1 omega subunit. When a sigma factor is associated with the core the holoenzyme is formed, which can initiate transcription. Requires Mg(2+) as cofactor. It depends on Zn(2+) as a cofactor.

It carries out the reaction RNA(n) + a ribonucleoside 5'-triphosphate = RNA(n+1) + diphosphate. In terms of biological role, DNA-dependent RNA polymerase catalyzes the transcription of DNA into RNA using the four ribonucleoside triphosphates as substrates. The polypeptide is DNA-directed RNA polymerase subunit beta' (Shouchella clausii (strain KSM-K16) (Alkalihalobacillus clausii)).